We begin with the raw amino-acid sequence, 264 residues long: Movement protein (264 aa).

Positions 219–264 (PSYRSRSQSVGGRGKRHSKPPNRRLDSASEESSSVSFEDGLQSDHT) are disordered. Residues 231–240 (RGKRHSKPPN) are compositionally biased toward basic residues.

The protein belongs to the tobamovirus movement protein family.

The protein resides in the host cytoplasm. It localises to the host cytoskeleton. Its subcellular location is the host cell junction. The protein localises to the host plasmodesma. Transports viral genome to neighboring plant cells directly through plasmosdesmata, without any budding. The movement protein allows efficient cell to cell propagation, by bypassing the host cell wall barrier. Forms a ribonucleoprotein complex with viral RNA. Binds microtubules and modulates microtubule stability. Can bind double-stranded DNA. This Cucumber green mottle mosaic virus (strain watermelon SH) (CGMMV) protein is Movement protein (MP).